A 663-amino-acid chain; its full sequence is DNA ligase (663 aa).

Residues 31 to 35 (DFEFD), 80 to 81 (SL), and glutamate 110 each bind NAD(+). The active-site N6-AMP-lysine intermediate is the lysine 112. NAD(+)-binding residues include arginine 133, glutamate 170, lysine 285, and lysine 309. Zn(2+) is bound by residues cysteine 404, cysteine 407, cysteine 422, and cysteine 428. Positions 585–663 (FIDNKLAGKT…SEDEFLKMIE (79 aa)) constitute a BRCT domain.

Belongs to the NAD-dependent DNA ligase family. LigA subfamily. It depends on Mg(2+) as a cofactor. Requires Mn(2+) as cofactor.

The enzyme catalyses NAD(+) + (deoxyribonucleotide)n-3'-hydroxyl + 5'-phospho-(deoxyribonucleotide)m = (deoxyribonucleotide)n+m + AMP + beta-nicotinamide D-nucleotide.. DNA ligase that catalyzes the formation of phosphodiester linkages between 5'-phosphoryl and 3'-hydroxyl groups in double-stranded DNA using NAD as a coenzyme and as the energy source for the reaction. It is essential for DNA replication and repair of damaged DNA. In Azobacteroides pseudotrichonymphae genomovar. CFP2, this protein is DNA ligase.